The following is a 159-amino-acid chain: 2-C-methyl-D-erythritol 2,4-cyclodiphosphate synthase (159 aa).

Asp-10 and His-12 together coordinate a divalent metal cation. 4-CDP-2-C-methyl-D-erythritol 2-phosphate is bound by residues Asp-10 to His-12 and His-36 to Ser-37. His-44 contacts a divalent metal cation. 4-CDP-2-C-methyl-D-erythritol 2-phosphate contacts are provided by residues Asp-58–Gly-60, Thr-134–Glu-137, Phe-141, and Arg-144.

The protein belongs to the IspF family. In terms of assembly, homotrimer. It depends on a divalent metal cation as a cofactor.

The enzyme catalyses 4-CDP-2-C-methyl-D-erythritol 2-phosphate = 2-C-methyl-D-erythritol 2,4-cyclic diphosphate + CMP. It functions in the pathway isoprenoid biosynthesis; isopentenyl diphosphate biosynthesis via DXP pathway; isopentenyl diphosphate from 1-deoxy-D-xylulose 5-phosphate: step 4/6. Functionally, involved in the biosynthesis of isopentenyl diphosphate (IPP) and dimethylallyl diphosphate (DMAPP), two major building blocks of isoprenoid compounds. Catalyzes the conversion of 4-diphosphocytidyl-2-C-methyl-D-erythritol 2-phosphate (CDP-ME2P) to 2-C-methyl-D-erythritol 2,4-cyclodiphosphate (ME-CPP) with a corresponding release of cytidine 5-monophosphate (CMP). The protein is 2-C-methyl-D-erythritol 2,4-cyclodiphosphate synthase of Bacteroides fragilis (strain ATCC 25285 / DSM 2151 / CCUG 4856 / JCM 11019 / LMG 10263 / NCTC 9343 / Onslow / VPI 2553 / EN-2).